The chain runs to 313 residues: Beta-ketoacyl-[acyl-carrier-protein] synthase III (313 aa).

Catalysis depends on residues Cys-112 and His-238. Residues 239 to 243 form an ACP-binding region; that stretch reads QANIR. The active site involves Asn-268.

It belongs to the thiolase-like superfamily. FabH family. In terms of assembly, homodimer.

The protein localises to the cytoplasm. The catalysed reaction is malonyl-[ACP] + acetyl-CoA + H(+) = 3-oxobutanoyl-[ACP] + CO2 + CoA. It functions in the pathway lipid metabolism; fatty acid biosynthesis. In terms of biological role, catalyzes the condensation reaction of fatty acid synthesis by the addition to an acyl acceptor of two carbons from malonyl-ACP. Catalyzes the first condensation reaction which initiates fatty acid synthesis and may therefore play a role in governing the total rate of fatty acid production. Possesses both acetoacetyl-ACP synthase and acetyl transacylase activities. Its substrate specificity determines the biosynthesis of branched-chain and/or straight-chain of fatty acids. This Staphylococcus aureus (strain COL) protein is Beta-ketoacyl-[acyl-carrier-protein] synthase III.